The following is a 531-amino-acid chain: UDP-glucuronosyltransferase 1A5 (531 aa).

An N-terminal signal peptide occupies residues 1–25 (MGLHVTLQGLAGLLLLLYALPWAEG). N-linked (GlcNAc...) asparagine glycosylation is found at Asn-116, Asn-131, Asn-139, Asn-293, and Asn-431. A helical transmembrane segment spans residues 489–505 (VIGFLLAIVLTVVFIVY).

Belongs to the UDP-glycosyltransferase family. In terms of assembly, homodimer. Homooligomer. Interacts with UGT1A1, UGT1A3, UGT1A4, UGT1A6, UGT1A7, UGT1A8, UGT1A9 and UGT1A10 to form heterodimers.

The protein resides in the endoplasmic reticulum membrane. It catalyses the reaction glucuronate acceptor + UDP-alpha-D-glucuronate = acceptor beta-D-glucuronoside + UDP + H(+). The enzyme catalyses zolasartan + UDP-alpha-D-glucuronate = zolarsartan-1-N-beta-D-glucuronide + UDP. Its function is as follows. UDP-glucuronosyltransferase (UGT) that catalyzes phase II biotransformation reactions in which lipophilic substrates are conjugated with glucuronic acid to increase the metabolite's water solubility, thereby facilitating excretion into either the urine or bile. Essential for the elimination and detoxification of drugs, xenobiotics and endogenous compounds. Involved in the glucuronidation of the AGTR1 angiotensin receptor antagonist zolarsatan, a drug which can inhibit the effect of angiotensin II. In Rattus norvegicus (Rat), this protein is UDP-glucuronosyltransferase 1A5.